Here is a 728-residue protein sequence, read N- to C-terminus: Ribosome biogenesis protein bop1-B (728 aa).

The disordered stretch occupies residues 1 to 114; that stretch reads MKRGSKRESG…ENDSSDEEDI (114 aa). Residues 50–67 show a composition bias toward acidic residues; the sequence is SGTDSSDDEEDHSSEEVQ. WD repeat units lie at residues 393–432, 434–474, 514–556, 559–597, 600–639, 643–682, and 698–728; these read GHKDLVRCISVSPSGQWLVSGSDDCSVRFWEVSTGRCMKS, VLEG…RLLC, KHQK…SQNP, KNKGQVQKVLFHPTRPFFFVATQRYVRVYNLLKQELTKK, TNCKWVSSIAVHPAGDNLICGSYDSKLAWFDMDLSTKPYK, HHKKALRAVSFHKSYPLFASGSDDASVIVCHGMVYNDLLQ, and HRDLGVLDVMFHPTQPWVFSSGADGTIRLFT.

It belongs to the WD repeat BOP1/ERB1 family. Component of the PeBoW complex, composed of bop1, pes1 and wdr12. The complex is held together by bop1, which interacts with pes1 via its N-terminal domain and with wdr12 via a high-affinity interaction between the seven-bladed beta-propeller domains of the 2 proteins. The PeBoW complex associates with the 66S pre-ribosome.

Its subcellular location is the nucleus. It is found in the nucleolus. The protein resides in the nucleoplasm. Its function is as follows. Component of the PeBoW complex, which is required for maturation of 28S and 5.8S ribosomal RNAs and formation of the 60S ribosome. This Xenopus laevis (African clawed frog) protein is Ribosome biogenesis protein bop1-B (bop1-b).